The sequence spans 524 residues: Glucose-6-phosphate isomerase (524 aa).

Glu-346 (proton donor) is an active-site residue. Residues His-377 and Lys-492 contribute to the active site.

This sequence belongs to the GPI family.

The protein resides in the cytoplasm. It catalyses the reaction alpha-D-glucose 6-phosphate = beta-D-fructose 6-phosphate. It functions in the pathway carbohydrate biosynthesis; gluconeogenesis. It participates in carbohydrate degradation; glycolysis; D-glyceraldehyde 3-phosphate and glycerone phosphate from D-glucose: step 2/4. Catalyzes the reversible isomerization of glucose-6-phosphate to fructose-6-phosphate. This chain is Glucose-6-phosphate isomerase, found in Chlamydia muridarum (strain MoPn / Nigg).